Reading from the N-terminus, the 332-residue chain is Trans-2'-carboxybenzalpyruvate hydratase-aldolase (332 aa).

Lys178 serves as the catalytic Schiff-base intermediate with substrate.

The protein belongs to the DapA family. As to quaternary structure, homotrimer.

It catalyses the reaction (3Z)-4-(2-carboxyphenyl)-2-oxobut-3-enoate + H2O = 2-formylbenzoate + pyruvate. With respect to regulation, not inhibited by sodium borohydride or sodium pyruvate. Unaffected by EDTA, EGTA, Mn(2+), Mg(2+) and Ca(2+). In terms of biological role, plays a role in phenanthrene catabolism. Catalyzes the transformation of trans-2'-carboxbenzalpyruvate to 2-formylbenzoate and pyruvate. In Nocardioides sp. (strain KP7), this protein is Trans-2'-carboxybenzalpyruvate hydratase-aldolase.